We begin with the raw amino-acid sequence, 320 residues long: MPMYQVKPYHGGSAPLRVELPTCMYRLPNVHSKTTSPATDAGHVQEPSEPSLRALESRQDDILKRLYELKAAVDGLSKMIHTPDADLDVTNILQADEPTTLTTNALDLNSVLGKDYGALKDIVINANPASPPLSLLVLHRLLCERYRVLSTVHTHSSVKNVPENLLKCFGEQARKQSRHEYQLGFTLIWKNVPKTQMKFSVQTMCPIEGEGNIARFLFSLFGQKHNAVHLTLIDSWVDIAMFQLREGSSKEKAAVFRSMNSALGKSPWLVGNELTVADVVLWSVLQQTGGSSGAAPTNVQRWLKSCENLAPFSTALQLLK.

The segment at 31–51 (HSKTTSPATDAGHVQEPSEPS) is disordered. A Phosphoserine modification is found at serine 36. An interaction with PRKN region spans residues 82-162 (TPDADLDVTN…HTHSSVKNVP (81 aa)). The segment at 162–225 (PENLLKCFGE…FLFSLFGQKH (64 aa)) is interaction with TP53. Positions 220–317 (LFGQKHNAVH…NLAPFSTALQ (98 aa)) constitute a GST C-terminal domain.

As to quaternary structure, part of the multisynthetase complex (MSC), a multisubunit complex that groups tRNA ligases for Arg (RARS1), Asp (DARS1), Gln (QARS1), Ile (IARS1), Leu (LARS1), Lys (KARS1), Met (MARS1) the bifunctional ligase for Glu and Pro (EPRS1) and the auxiliary subunits AIMP1/p43, AIMP2/p38 and EEF1E1/p18. Interacts (via N-terminus) with KARS1. Interacts with EPRS1. Forms a linear complex that contains MARS1, EEF1E1, EPRS1 and AIMP2 that is at the core of the multisubunit complex. Binds FUBP1 (via C-terminus). Interacts in both its unphosphorylated and phosphorylated forms with p53/TP53 (via N-terminus) in the nucleus following UV irradiation. Interacts (via N-terminus) with PRKN/parkin (via first RING-type domain). Interacts with TARS3. Phosphorylated on serine residues in response to UV irradiation. In terms of processing, ubiquitinated by PRKN, leading to its degradation by the proteasome.

It is found in the cytoplasm. The protein resides in the cytosol. Its subcellular location is the nucleus. In terms of biological role, required for assembly and stability of the aminoacyl-tRNA synthase complex. Mediates ubiquitination and degradation of FUBP1, a transcriptional activator of MYC, leading to MYC down-regulation which is required for aveolar type II cell differentiation. Blocks MDM2-mediated ubiquitination and degradation of p53/TP53. Functions as a proapoptotic factor. The protein is Aminoacyl tRNA synthase complex-interacting multifunctional protein 2 (Aimp2) of Rattus norvegicus (Rat).